Consider the following 144-residue polypeptide: L-fucose mutarotase (144 aa).

H22 (proton donor) is an active-site residue. Residues D30, R109, and 131-133 (YGN) each bind substrate.

The protein belongs to the RbsD / FucU family. FucU mutarotase subfamily. As to quaternary structure, homodecamer.

It is found in the cytoplasm. The catalysed reaction is alpha-L-fucose = beta-L-fucose. Its pathway is carbohydrate metabolism; L-fucose metabolism. In terms of biological role, involved in the anomeric conversion of L-fucose. The protein is L-fucose mutarotase of Actinobacillus pleuropneumoniae serotype 5b (strain L20).